Consider the following 254-residue polypeptide: Switch-activating protein 1 (254 aa).

The span at 1 to 10 (MEAPKMELKS) shows a compositional bias: basic and acidic residues. Positions 1 to 30 (MEAPKMELKSYKRKNASLSPSSSPAKAQRT) are disordered. The span at 16 to 25 (ASLSPSSSPA) shows a compositional bias: low complexity. Phosphoserine occurs at positions 17 and 19. 4 repeat units span residues 221-224 (GVNM), 225-228 (GTNM), 229-232 (GANM), and 233-236 (GANM). The interval 221–236 (GVNMGTNMGANMGANM) is 4 X 4 AA tandem repeats of G-[ATV]-N-M.

As to quaternary structure, homodimer.

It is found in the nucleus. Functionally, binds to sequences required for mating-type switching. Makes a simultaneous contact with both the alpha and beta domains of the switch-activating site SAS1. Also binds to replication fork barrier 1 (RFB1) located within a 78 base pair sequence near the 3' end of the rRNA coding region. This leads to replication fork blockage. It binds the consensus sequence 5'-TA[AG]GCAGNTN[CT]AACG[AC]G-3'. Has a role in chromosome organization and integrity where it is involved in chromosome segregation. Has a role in sister chromatid cohesion and condensation. The polypeptide is Switch-activating protein 1 (sap1) (Schizosaccharomyces pombe (strain 972 / ATCC 24843) (Fission yeast)).